Consider the following 872-residue polypeptide: Facilitated trehalose transporter Tret1 (872 aa).

4 disordered regions span residues M1–K40, V53–S217, S262–Q281, and K293–I315. Topologically, residues M1–Y406 are cytoplasmic. Gly residues predominate over residues G8–G22. 3 stretches are compositionally biased toward low complexity: residues S55–T68, R84–R98, and P121–Q132. S262, S263, and S264 each carry phosphoserine. Phosphoserine occurs at positions 334 and 336. Residues F340 to R361 are disordered. A compositionally biased stretch (polar residues) spans R344–T355. A helical membrane pass occupies residues I407–V427. The Extracellular segment spans residues S428–S454. N442 carries an N-linked (GlcNAc...) asparagine glycan. A helical transmembrane segment spans residues W455–I475. Over E476 to A488 the chain is Cytoplasmic. Residues V489 to L509 form a helical membrane-spanning segment. Residues G510–R511 are Extracellular-facing. The chain crosses the membrane as a helical span at residues F512 to T532. The Cytoplasmic segment spans residues V533 to R538. Residues G539–A559 form a helical membrane-spanning segment. Residues G560–S566 lie on the Extracellular side of the membrane. A helical membrane pass occupies residues M567–P587. Residues E588–P650 lie on the Cytoplasmic side of the membrane. A helical transmembrane segment spans residues L651–F671. The Extracellular segment spans residues Y672–N687. Residues V688 to I708 form a helical membrane-spanning segment. The Cytoplasmic segment spans residues D709–K714. The chain crosses the membrane as a helical span at residues I715–F735. Residues Y736–C755 lie on the Extracellular side of the membrane. The helical transmembrane segment at F756–G776 threads the bilayer. The Cytoplasmic portion of the chain corresponds to E777–R784. Residues G785–T803 form a helical membrane-spanning segment. At K804–Y816 the chain is on the extracellular side. A helical membrane pass occupies residues G817 to V837. Topologically, residues P838–M872 are cytoplasmic. A phosphoserine mark is found at S860 and S861.

It belongs to the major facilitator superfamily. Sugar transporter (TC 2.A.1.1) family. Trehalose transporter subfamily.

Its subcellular location is the cell membrane. Functionally, low-capacity facilitative transporter for trehalose. Does not transport maltose, sucrose or lactose. Mediates the bidirectional transfer of trehalose. Responsible for the transport of trehalose synthesized in the fat body and the incorporation of trehalose into other tissues that require a carbon source, thereby regulating trehalose levels in the hemolymph. This chain is Facilitated trehalose transporter Tret1, found in Drosophila willistoni (Fruit fly).